The primary structure comprises 285 residues: Trypsin Tyr p 3.0101 (285 aa).

The signal sequence occupies residues 1–16; the sequence is MKILLFLCFLVSVAFA. Positions 17–33 are excised as a propeptide; the sequence is KPPTIQLKSNTKSQNGF. A Peptidase S1 domain is found at 34–262; it reads IVGGTEAVDG…YLDWIELSAK (229 aa). A disulfide bridge connects residues cysteine 58 and cysteine 74. Catalysis depends on charge relay system residues histidine 73 and aspartate 120. 2 disulfide bridges follow: cysteine 186–cysteine 202 and cysteine 214–cysteine 238. Residue serine 218 is the Charge relay system of the active site.

This sequence belongs to the peptidase S1 family.

It localises to the secreted. The catalysed reaction is Preferential cleavage: Arg-|-Xaa, Lys-|-Xaa.. Its activity is regulated as follows. Inhibited by the serine protease inhibitor phenylmethylsulfonyl, and trypsin inhibitors soybean trypsin inhibitor and tosyllysine chloromethyl ketone. Not inhibited by dithiothreitol, a cysteine protease inhibitor. Its function is as follows. Digests TAMe (p-toluene arginine methyl ester), but not ethyl N-benzoyl-L-tyrosinate (BTEE). This Tyrophagus putrescentiae (Mold mite) protein is Trypsin Tyr p 3.0101.